The following is a 111-amino-acid chain: Large ribosomal subunit protein uL22 (111 aa).

The protein belongs to the universal ribosomal protein uL22 family. In terms of assembly, part of the 50S ribosomal subunit.

This protein binds specifically to 23S rRNA; its binding is stimulated by other ribosomal proteins, e.g. L4, L17, and L20. It is important during the early stages of 50S assembly. It makes multiple contacts with different domains of the 23S rRNA in the assembled 50S subunit and ribosome. In terms of biological role, the globular domain of the protein is located near the polypeptide exit tunnel on the outside of the subunit, while an extended beta-hairpin is found that lines the wall of the exit tunnel in the center of the 70S ribosome. This chain is Large ribosomal subunit protein uL22, found in Wigglesworthia glossinidia brevipalpis.